The primary structure comprises 99 residues: DNA-binding protein HU (99 aa).

The disordered stretch occupies residues 63–82; sequence HRKEREGRNPKTGAKMKIDA.

The protein belongs to the bacterial histone-like protein family. As to quaternary structure, homodimer.

Its function is as follows. Histone-like DNA-binding protein which is capable of wrapping DNA to stabilize it, and thus to prevent its denaturation under extreme environmental conditions. This is DNA-binding protein HU (hup) from Rickettsia prowazekii (strain Madrid E).